The chain runs to 83 residues: Sulfur carrier protein TusA (83 aa).

C19 (cysteine persulfide intermediate) is an active-site residue.

This sequence belongs to the sulfur carrier protein TusA family.

It localises to the cytoplasm. Sulfur carrier protein which probably makes part of a sulfur-relay system. This chain is Sulfur carrier protein TusA, found in Aliivibrio fischeri (strain ATCC 700601 / ES114) (Vibrio fischeri).